The primary structure comprises 148 residues: Ubiquitin-conjugating enzyme E2 28 (148 aa).

Residues 1-147 (MASKRILKEL…ARSWTQKYAM (147 aa)) enclose the UBC core domain. The Glycyl thioester intermediate role is filled by C85.

This sequence belongs to the ubiquitin-conjugating enzyme family. In terms of assembly, interacts with SINAT5. Expressed in seeds, pistils, siliques, hypocotyls and leaves.

It catalyses the reaction S-ubiquitinyl-[E1 ubiquitin-activating enzyme]-L-cysteine + [E2 ubiquitin-conjugating enzyme]-L-cysteine = [E1 ubiquitin-activating enzyme]-L-cysteine + S-ubiquitinyl-[E2 ubiquitin-conjugating enzyme]-L-cysteine.. It participates in protein modification; protein ubiquitination. Accepts the ubiquitin from the E1 complex and catalyzes its covalent attachment to other proteins. The protein is Ubiquitin-conjugating enzyme E2 28 of Arabidopsis thaliana (Mouse-ear cress).